A 198-amino-acid polypeptide reads, in one-letter code: MAKVLVLYYSMYGHIETMARAVAEGASKVDGAEVIVKRVPETMPPQLFEKAGGKTQTAPVATPQELADYDAIIFGTPTRFGNMSGQMRTFLDQTGGLWASGALYGKLASVFSSTGTGGGQEQTITSTWTTLAHHGMVIVPIGYAAQELFDVSQVRGGTPYGATTIAGGDGSRQPSQEELSIARYQGEYVAGLAVKLNG.

Residues 4–189 (VLVLYYSMYG…SIARYQGEYV (186 aa)) form the Flavodoxin-like domain. FMN contacts are provided by residues 10-15 (SMYGHI) and 78-80 (TRF). Residue Tyr-12 participates in NAD(+) binding. Trp-98 contributes to the substrate binding site. FMN-binding positions include 113-118 (STGTGG) and His-133.

Belongs to the WrbA family. Requires FMN as cofactor.

The enzyme catalyses a quinone + NADH + H(+) = a quinol + NAD(+). It carries out the reaction a quinone + NADPH + H(+) = a quinol + NADP(+). This is NAD(P)H dehydrogenase (quinone) from Escherichia fergusonii (strain ATCC 35469 / DSM 13698 / CCUG 18766 / IAM 14443 / JCM 21226 / LMG 7866 / NBRC 102419 / NCTC 12128 / CDC 0568-73).